Here is a 238-residue protein sequence, read N- to C-terminus: Uridylate kinase (238 aa).

Position 11–14 (11–14) interacts with ATP; that stretch reads KLSG. A UMP-binding site is contributed by glycine 52. The ATP site is built by glycine 53 and arginine 57. UMP contacts are provided by residues aspartate 72 and 134 to 141; that span reads TGFSYFTT. Residues asparagine 162, tyrosine 168, and aspartate 171 each coordinate ATP.

Belongs to the UMP kinase family. Homohexamer.

The protein resides in the cytoplasm. The catalysed reaction is UMP + ATP = UDP + ADP. The protein operates within pyrimidine metabolism; CTP biosynthesis via de novo pathway; UDP from UMP (UMPK route): step 1/1. With respect to regulation, inhibited by UTP. Functionally, catalyzes the reversible phosphorylation of UMP to UDP. This chain is Uridylate kinase, found in Mesoplasma florum (strain ATCC 33453 / NBRC 100688 / NCTC 11704 / L1) (Acholeplasma florum).